A 347-amino-acid polypeptide reads, in one-letter code: MKQTIILLYGGRSAEREVSVLSAESVMRAVNYDRFTVKTFFISQSGDFIKTQEFSHAPGQEDRLMTNETIDWDKKVAPSAIYEEGAVVFPVLHGPMGEDGSVQGFLEVLKMPYVGCNILSSSLAMDKITTKRVLESAGIAQVPYVAIVEGDDVTAKIAEVEEKLAYPVFTKPSNMGSSVGISKSENQEELRQALKLAFRYDSRVLVEQGVNAREIEVGLLGNYDVKSTLPGEVVKDVAFYDYDAKYIDNKITMDIPAKISDDVVAVMRQNAETAFRAIGGLGLSRCDFFYTDKGEIFLNELNTMPGFTQWSMYPLLWDNMGISYPELIERLVDLAKESFDKREAHLI.

Residues 131–333 (KRVLESAGIA…YPELIERLVD (203 aa)) enclose the ATP-grasp domain. 161-216 (EEKLAYPVFTKPSNMGSSVGISKSENQEELRQALKLAFRYDSRVLVEQGVNAREIE) contacts ATP. Mg(2+) is bound by residues aspartate 287, glutamate 300, and asparagine 302.

The protein belongs to the D-alanine--D-alanine ligase family. It depends on Mg(2+) as a cofactor. Mn(2+) is required as a cofactor.

It localises to the cytoplasm. The catalysed reaction is 2 D-alanine + ATP = D-alanyl-D-alanine + ADP + phosphate + H(+). Its pathway is cell wall biogenesis; peptidoglycan biosynthesis. Cell wall formation. This is D-alanine--D-alanine ligase from Streptococcus pneumoniae serotype 19F (strain G54).